Consider the following 181-residue polypeptide: Copper-resistant cuproprotein CopI (181 aa).

The first 24 residues, 1 to 24, serve as a signal peptide directing secretion; it reads MFPRRLLPASLIVLGVLFGASAQA. Cu(2+) is bound by residues His-79, Cys-163, His-168, and Met-173.

This sequence belongs to the CopI family.

The protein localises to the periplasm. Its function is as follows. Involved in copper tolerance. The sequence is that of Copper-resistant cuproprotein CopI from Pseudomonas aeruginosa (strain ATCC 15692 / DSM 22644 / CIP 104116 / JCM 14847 / LMG 12228 / 1C / PRS 101 / PAO1).